Here is a 434-residue protein sequence, read N- to C-terminus: Adenylosuccinate synthetase (434 aa).

Residues 25–31 (GDEGKGK) and 53–55 (GHT) contribute to the GTP site. Asp26 (proton acceptor) is an active-site residue. Mg(2+) is bound by residues Asp26 and Gly53. IMP-binding positions include 26 to 29 (DEGK), 51 to 54 (NAGH), Thr142, Arg156, Asn233, Thr248, and Arg312. The Proton donor role is filled by His54. Residue 308-314 (VTTGRKR) participates in substrate binding. Residues Arg314, 340–342 (KLD), and 422–424 (GVG) contribute to the GTP site.

Belongs to the adenylosuccinate synthetase family. Homodimer. Mg(2+) serves as cofactor.

The protein localises to the cytoplasm. The enzyme catalyses IMP + L-aspartate + GTP = N(6)-(1,2-dicarboxyethyl)-AMP + GDP + phosphate + 2 H(+). It functions in the pathway purine metabolism; AMP biosynthesis via de novo pathway; AMP from IMP: step 1/2. Its function is as follows. Plays an important role in the de novo pathway and in the salvage pathway of purine nucleotide biosynthesis. Catalyzes the first committed step in the biosynthesis of AMP from IMP. The protein is Adenylosuccinate synthetase of Schizosaccharomyces japonicus (strain yFS275 / FY16936) (Fission yeast).